The primary structure comprises 384 residues: Histone acetyltransferase type B subunit 2 (384 aa).

WD repeat units follow at residues glycine 156–serine 196, arginine 203–alanine 243, alanine 247–histidine 287, glycine 291–proline 331, and glycine 348–glutamate 384.

Belongs to the WD repeat RBAP46/RBAP48/MSI1 family. Component of the HAT-B complex.

The protein resides in the cytoplasm. Its subcellular location is the nucleus. Functionally, regulatory subunit of the histone acetylase B (HAT-B) complex. The complex acetylates histone H4 which is required for telomeric silencing. This is Histone acetyltransferase type B subunit 2 (HAT2) from Encephalitozoon cuniculi (strain GB-M1) (Microsporidian parasite).